Here is a 512-residue protein sequence, read N- to C-terminus: Protein SHC1 (512 aa).

A compositionally biased stretch (acidic residues) spans 101 to 113; sequence EQDEFENDVEDDA. Disordered regions lie at residues 101 to 122 and 144 to 165; these read EQDEFENDVEDDASSSLKEKSQ and DGNSEFHDFAEPPPSQNESVAL. Sel1-like repeat units lie at residues 318 to 353, 354 to 389, 390 to 429, and 433 to 470; these read PDAQYLLGDAYSSGVFGKIKNRRAFLLFSAAAKRLH, IESVYRTAICYECGLGVTRNAPKAVNFLTFAATKNH, PAAMYKLGVYSYHGLMGLPDDILTKMDGYRWLRRATSMAS, and CGAPFELANIYMTGYKDLIISDPDYAMALYEKAAALGH.

Belongs to the SKT5 family.

It localises to the cytoplasm. Its subcellular location is the cytoplasmic granule membrane. Required for the activation of chitin synthase III (CHS3) activity during the sporulation process. This chain is Protein SHC1 (SHC1), found in Saccharomyces cerevisiae (strain YJM789) (Baker's yeast).